The primary structure comprises 57 residues: MKFEVRGAFKTLEGWQKFTKVVEANNERYALEKVYSLIGSNHKVKRNLIKIEEVKQA.

It belongs to the eukaryotic ribosomal protein eL20 family. Part of the 50S ribosomal subunit. Binds 23S rRNA.

The polypeptide is Large ribosomal subunit protein eL20 (Archaeoglobus fulgidus (strain ATCC 49558 / DSM 4304 / JCM 9628 / NBRC 100126 / VC-16)).